The following is a 241-amino-acid chain: Class B acid phosphatase (241 aa).

The first 27 residues, 1–27, serve as a signal peptide directing secretion; that stretch reads MFITTKKSLIALVLATAGLISSPVSFA. Aspartate 72 functions as the Nucleophile in the catalytic mechanism. The Mg(2+) site is built by aspartate 72 and aspartate 74. The active-site Proton donor is the aspartate 74. Substrate-binding positions include 141 to 142 and lysine 181; that span reads TG. Aspartate 196 serves as a coordination point for Mg(2+).

The protein belongs to the class B bacterial acid phosphatase family. In terms of assembly, homotetramer. Requires Mg(2+) as cofactor.

It localises to the periplasm. The catalysed reaction is a phosphate monoester + H2O = an alcohol + phosphate. In terms of biological role, dephosphorylates several organic phosphate monoesters. Also has a phosphotransferase activity catalyzing the transfer of low-energy phosphate groups from organic phosphate monoesters to free hydroxyl groups of various organic compounds. The protein is Class B acid phosphatase of Edwardsiella ictaluri (strain 93-146).